We begin with the raw amino-acid sequence, 316 residues long: Probable cell division protein WhiA (316 aa).

The H-T-H motif DNA-binding region spans 275–309; the sequence is TLKELGEMVASGKISKSGINHRLRKLDEIAEQLRT.

Belongs to the WhiA family.

In terms of biological role, involved in cell division and chromosome segregation. In Bacillus velezensis (strain DSM 23117 / BGSC 10A6 / LMG 26770 / FZB42) (Bacillus amyloliquefaciens subsp. plantarum), this protein is Probable cell division protein WhiA.